The sequence spans 158 residues: SsrA-binding protein (158 aa).

It belongs to the SmpB family.

Its subcellular location is the cytoplasm. Required for rescue of stalled ribosomes mediated by trans-translation. Binds to transfer-messenger RNA (tmRNA), required for stable association of tmRNA with ribosomes. tmRNA and SmpB together mimic tRNA shape, replacing the anticodon stem-loop with SmpB. tmRNA is encoded by the ssrA gene; the 2 termini fold to resemble tRNA(Ala) and it encodes a 'tag peptide', a short internal open reading frame. During trans-translation Ala-aminoacylated tmRNA acts like a tRNA, entering the A-site of stalled ribosomes, displacing the stalled mRNA. The ribosome then switches to translate the ORF on the tmRNA; the nascent peptide is terminated with the 'tag peptide' encoded by the tmRNA and targeted for degradation. The ribosome is freed to recommence translation, which seems to be the essential function of trans-translation. In Bartonella quintana (strain Toulouse) (Rochalimaea quintana), this protein is SsrA-binding protein.